The following is a 179-amino-acid chain: MYEYLDRRYALALYEVAEENNKVDEYLRDLKEVVNIIKNSEDICKILKHPEINTSRKKEIFTELFKDKVDDKILSFLLVLIEKDRILYLEEKLKEMEKIYLEKNNMILANIKTVIPLLKEEREELIEKLGNKYNKKIILEEEIDKSIIGGVYVRVGDDVLDGTLSTRLKDIKKMMLKRE.

This sequence belongs to the ATPase delta chain family. F-type ATPases have 2 components, F(1) - the catalytic core - and F(0) - the membrane proton channel. F(1) has five subunits: alpha(3), beta(3), gamma(1), delta(1), epsilon(1). F(0) has three main subunits: a(1), b(2) and c(10-14). The alpha and beta chains form an alternating ring which encloses part of the gamma chain. F(1) is attached to F(0) by a central stalk formed by the gamma and epsilon chains, while a peripheral stalk is formed by the delta and b chains.

It localises to the cell membrane. Its function is as follows. F(1)F(0) ATP synthase produces ATP from ADP in the presence of a proton or sodium gradient. F-type ATPases consist of two structural domains, F(1) containing the extramembraneous catalytic core and F(0) containing the membrane proton channel, linked together by a central stalk and a peripheral stalk. During catalysis, ATP synthesis in the catalytic domain of F(1) is coupled via a rotary mechanism of the central stalk subunits to proton translocation. This protein is part of the stalk that links CF(0) to CF(1). It either transmits conformational changes from CF(0) to CF(1) or is implicated in proton conduction. The chain is ATP synthase subunit delta from Clostridium botulinum (strain ATCC 19397 / Type A).